Reading from the N-terminus, the 497-residue chain is Cytochrome P450 monooxygenase opdB (497 aa).

A helical membrane pass occupies residues 26-46 (YLGAMAGSVILLISAFTLSLG). A disordered region spans residues 69 to 90 (MSKFTRSRELSQQGEDAAGTEP). C454 contributes to the heme binding site.

Heme is required as a cofactor.

The protein resides in the membrane. The protein operates within secondary metabolite biosynthesis. Cytochrome P450 monooxygenase; part of the gene cluster that mediates the biosynthesis of oxopyrrolidines, polyketide-amino acid hybrid compounds with feature structures of tetramic acid. Does not seem to play a role in oxopyrrolidines A and B biosynthesis. May be involved in further modifications of these oxopyrrolidines. This chain is Cytochrome P450 monooxygenase opdB, found in Penicillium oxalicum (strain 114-2 / CGMCC 5302) (Penicillium decumbens).